The sequence spans 487 residues: Protein nucleotidyltransferase YdiU (487 aa).

The ATP site is built by Gly-90, Gly-92, Arg-93, Lys-113, Asp-125, Gly-126, Arg-176, and Arg-183. Asp-252 (proton acceptor) is an active-site residue. Residues Asn-253 and Asp-262 each coordinate Mg(2+). Position 262 (Asp-262) interacts with ATP.

This sequence belongs to the SELO family. Mg(2+) is required as a cofactor. Mn(2+) serves as cofactor.

It catalyses the reaction L-seryl-[protein] + ATP = 3-O-(5'-adenylyl)-L-seryl-[protein] + diphosphate. The enzyme catalyses L-threonyl-[protein] + ATP = 3-O-(5'-adenylyl)-L-threonyl-[protein] + diphosphate. The catalysed reaction is L-tyrosyl-[protein] + ATP = O-(5'-adenylyl)-L-tyrosyl-[protein] + diphosphate. It carries out the reaction L-histidyl-[protein] + UTP = N(tele)-(5'-uridylyl)-L-histidyl-[protein] + diphosphate. It catalyses the reaction L-seryl-[protein] + UTP = O-(5'-uridylyl)-L-seryl-[protein] + diphosphate. The enzyme catalyses L-tyrosyl-[protein] + UTP = O-(5'-uridylyl)-L-tyrosyl-[protein] + diphosphate. In terms of biological role, nucleotidyltransferase involved in the post-translational modification of proteins. It can catalyze the addition of adenosine monophosphate (AMP) or uridine monophosphate (UMP) to a protein, resulting in modifications known as AMPylation and UMPylation. The protein is Protein nucleotidyltransferase YdiU of Pseudomonas savastanoi pv. phaseolicola (strain 1448A / Race 6) (Pseudomonas syringae pv. phaseolicola (strain 1448A / Race 6)).